Consider the following 190-residue polypeptide: uncharacterized protein (190 aa).

To E.coli YdjR.

This is an uncharacterized protein from Pseudomonas putida (Arthrobacter siderocapsulatus).